The chain runs to 404 residues: Argininosuccinate synthase (404 aa).

ATP-binding positions include 12–20 and Ala40; that span reads AYSGGLDTS. The L-citrulline site is built by Tyr92 and Ser97. An ATP-binding site is contributed by Gly122. Thr124, Asn128, and Asp129 together coordinate L-aspartate. Asn128 is an L-citrulline binding site. Residues Arg132, Ser181, Ser190, Glu266, and Tyr278 each coordinate L-citrulline.

This sequence belongs to the argininosuccinate synthase family. Type 1 subfamily. Homotetramer.

The protein localises to the cytoplasm. The catalysed reaction is L-citrulline + L-aspartate + ATP = 2-(N(omega)-L-arginino)succinate + AMP + diphosphate + H(+). It functions in the pathway amino-acid biosynthesis; L-arginine biosynthesis; L-arginine from L-ornithine and carbamoyl phosphate: step 2/3. The polypeptide is Argininosuccinate synthase (Photorhabdus laumondii subsp. laumondii (strain DSM 15139 / CIP 105565 / TT01) (Photorhabdus luminescens subsp. laumondii)).